The following is a 610-amino-acid chain: UvrABC system protein C (610 aa).

The region spanning 16–94 (SQPGVYRMYD…IKLYQPRYNV (79 aa)) is the GIY-YIG domain. In terms of domain architecture, UVR spans 204 to 239 (DQVLTQLIARMEKASQDLAFEEAARIRDQIQAVRRV).

The protein belongs to the UvrC family. As to quaternary structure, interacts with UvrB in an incision complex.

Its subcellular location is the cytoplasm. In terms of biological role, the UvrABC repair system catalyzes the recognition and processing of DNA lesions. UvrC both incises the 5' and 3' sides of the lesion. The N-terminal half is responsible for the 3' incision and the C-terminal half is responsible for the 5' incision. This chain is UvrABC system protein C, found in Salmonella enteritidis PT4 (strain P125109).